The following is a 418-amino-acid chain: E3 ubiquitin-protein ligase makorin-2 (418 aa).

2 consecutive C3H1-type zinc fingers follow at residues 2–29 (NTKH…HDLA) and 31–58 (SKPS…HVKP). The segment at 76–100 (ESTPPLLPTQEAAAPVTKSAPQRRE) is disordered. A C3H1-type 3 zinc finger spans residues 164–191 (DAPQQLCPFAQAGGCHYGESCPYIHGNV). The segment at 192–221 (CEICGLQVLHPYDQEQRGHHEKLCMANFER) is makorin-type Cys-His. The RING-type zinc-finger motif lies at 237 to 291 (CSICMERVYDKQSPSERRFGILSNCHHTYCLACIRQWRCARQFENPVIKSCPECR). The segment at 320-349 (GMGKKACKYFDQGRGTCPFGGKCLYLHAYP) adopts a C3H1-type 4 zinc-finger fold.

It is found in the cytoplasm. It localises to the nucleus. The enzyme catalyses S-ubiquitinyl-[E2 ubiquitin-conjugating enzyme]-L-cysteine + [acceptor protein]-L-lysine = [E2 ubiquitin-conjugating enzyme]-L-cysteine + N(6)-ubiquitinyl-[acceptor protein]-L-lysine.. It participates in protein modification; protein ubiquitination. E3 ubiquitin ligase catalyzing the covalent attachment of ubiquitin moieties onto substrate proteins. Inhibits neurogenesis and axis formation during embryonic development by modulating the phosphatidylinositol 3-kinase (PI3K) pathway. Acts downstream of PI3K and akt1 to up-regulate gsk3b mRNA expression. The sequence is that of E3 ubiquitin-protein ligase makorin-2 (mkrn2) from Xenopus tropicalis (Western clawed frog).